A 212-amino-acid chain; its full sequence is Thymidylate kinase (212 aa).

11–18 (GPDGAGKT) is an ATP binding site.

The protein belongs to the thymidylate kinase family.

The enzyme catalyses dTMP + ATP = dTDP + ADP. In terms of biological role, phosphorylation of dTMP to form dTDP in both de novo and salvage pathways of dTTP synthesis. The chain is Thymidylate kinase from Streptococcus mutans serotype c (strain ATCC 700610 / UA159).